A 636-amino-acid chain; its full sequence is Putative ankyrin repeat protein L766 (636 aa).

11 ANK repeats span residues 63 to 97, 99 to 129, 130 to 159, 161 to 190, 230 to 259, 261 to 284, 322 to 355, 372 to 400, 425 to 455, 517 to 546, and 548 to 575; these read NNYL…DYEL, STCH…YIDS, FGNI…FFNC, YYYL…KSNN, FDEK…NYDF, TIIN…YLTD, SRII…KTSI, NPDE…NIPD, DSLE…DTTI, NSIE…NDNN, and LSWA…DIYQ.

This is Putative ankyrin repeat protein L766 from Acanthamoeba polyphaga mimivirus (APMV).